A 130-amino-acid chain; its full sequence is Large ribosomal subunit protein bL12 (130 aa).

The protein belongs to the bacterial ribosomal protein bL12 family. As to quaternary structure, homodimer. Part of the ribosomal stalk of the 50S ribosomal subunit. Forms a multimeric L10(L12)X complex, where L10 forms an elongated spine to which 2 to 4 L12 dimers bind in a sequential fashion. Binds GTP-bound translation factors.

Forms part of the ribosomal stalk which helps the ribosome interact with GTP-bound translation factors. Is thus essential for accurate translation. The sequence is that of Large ribosomal subunit protein bL12 from Nostoc sp. (strain PCC 7120 / SAG 25.82 / UTEX 2576).